Consider the following 81-residue polypeptide: Protein Vpu (81 aa).

At 1–7 (MQPSQII) the chain is on the extracellular side. The helical transmembrane segment at 8–28 (AIAALVVAAIIAIVVWTIVFI) threads the bilayer. The Cytoplasmic segment spans residues 29-81 (EYRRIKRQRKIDCIIDRIRERAEDSGNESEGDREELSKLVEMGHHAPWDIDDL). 2 positions are modified to phosphoserine; by host CK2: serine 53 and serine 57.

Belongs to the HIV-1 VPU protein family. Homopentamer. Interacts with host CD4 and BRTC; these interactions induce proteasomal degradation of CD4. Interacts with host BST2; this interaction leads to the degradation of host BST2. Interacts with host FBXW11. Interacts with host AP1M1; this interaction plays a role in the mistrafficking and subsequent degradation of host BST2. Interacts with host RANBP2; this interaction allows Vpu to down-regulate host BLM sumoylation. Post-translationally, phosphorylated by host CK2. This phosphorylation is necessary for interaction with human BTRC and degradation of CD4.

The protein localises to the host membrane. With respect to regulation, ion channel activity is inhibited by hexamethylene amiloride in vitro. Its function is as follows. Enhances virion budding by targeting host CD4 and Tetherin/BST2 to proteasome degradation. Degradation of CD4 prevents any unwanted premature interactions between viral Env and its host receptor CD4 in the endoplasmic reticulum. Degradation of antiretroviral protein Tetherin/BST2 is important for virion budding, as BST2 tethers new viral particles to the host cell membrane. Mechanistically, Vpu bridges either CD4 or BST2 to BTRC, a substrate recognition subunit of the Skp1/Cullin/F-box protein E3 ubiquitin ligase, induces their ubiquitination and subsequent proteasomal degradation. The alteration of the E3 ligase specificity by Vpu seems to promote the degradation of host IKBKB, leading to NF-kappa-B down-regulation and subsequent apoptosis. Acts as a viroporin that forms an oligomeric ion channel in membranes. Modulates the host DNA repair mechanisms to promote degradation of nuclear viral cDNA in cells that are already productively infected in order to suppress immune sensing and proviral hyper-integration (superinfection). Manipulates PML-NBs and modulates SUMOylation of host BLM protein thereby enhancing its DNA-end processing activity toward viral unintegrated linear DNA. Also inhibits RAD52-mediated homologous repair of viral cDNA, preventing the generation of dead-end circular forms of single copies of the long terminal repeat and permitting sustained nucleolytic attack. This Homo sapiens (Human) protein is Protein Vpu.